The chain runs to 89 residues: Small ribosomal subunit protein uS15 (89 aa).

This sequence belongs to the universal ribosomal protein uS15 family. As to quaternary structure, part of the 30S ribosomal subunit. Forms a bridge to the 50S subunit in the 70S ribosome, contacting the 23S rRNA.

One of the primary rRNA binding proteins, it binds directly to 16S rRNA where it helps nucleate assembly of the platform of the 30S subunit by binding and bridging several RNA helices of the 16S rRNA. Its function is as follows. Forms an intersubunit bridge (bridge B4) with the 23S rRNA of the 50S subunit in the ribosome. This chain is Small ribosomal subunit protein uS15, found in Pelodictyon phaeoclathratiforme (strain DSM 5477 / BU-1).